A 354-amino-acid chain; its full sequence is Elongation factor Ts (354 aa).

The involved in Mg(2+) ion dislocation from EF-Tu stretch occupies residues 81–84 (TDFV).

It belongs to the EF-Ts family.

The protein resides in the cytoplasm. Associates with the EF-Tu.GDP complex and induces the exchange of GDP to GTP. It remains bound to the aminoacyl-tRNA.EF-Tu.GTP complex up to the GTP hydrolysis stage on the ribosome. This chain is Elongation factor Ts, found in Campylobacter fetus subsp. fetus (strain 82-40).